The chain runs to 337 residues: Annexin E1 (337 aa).

Annexin repeat units lie at residues 10–80, 81–154, 161–238, and 242–312; these read TGVT…MLYK, PRAQ…AVAT, DTHE…LAHD, and DPCC…LLWE.

This sequence belongs to the annexin family.

It localises to the cell projection. It is found in the cilium. Its subcellular location is the flagellum. Functionally, may function as a calcium-regulated structural element linking phospholipid bilayer and underlying axoneme. The polypeptide is Annexin E1 (ANXE1) (Giardia intestinalis (Giardia lamblia)).